The sequence spans 227 residues: LexA repressor (227 aa).

A DNA-binding region (H-T-H motif) is located at residues 25–45; that stretch reads FDEMKDALDLRSKSGIHRLIT. Catalysis depends on for autocatalytic cleavage activity residues serine 148 and lysine 186.

Belongs to the peptidase S24 family. As to quaternary structure, homodimer.

The catalysed reaction is Hydrolysis of Ala-|-Gly bond in repressor LexA.. In terms of biological role, represses a number of genes involved in the response to DNA damage (SOS response), including recA and lexA. In the presence of single-stranded DNA, RecA interacts with LexA causing an autocatalytic cleavage which disrupts the DNA-binding part of LexA, leading to derepression of the SOS regulon and eventually DNA repair. This is LexA repressor from Cereibacter sphaeroides (strain ATCC 17029 / ATH 2.4.9) (Rhodobacter sphaeroides).